Here is a 233-residue protein sequence, read N- to C-terminus: MNKPIIALDFQTYEEVETFLANFSGESLSVKVGMELFYSNGPIIVEKIKQQNHAIFLDLKLHDIPNTVKSAMISLAKLGVDMVNVHAAGGKKMMEFAREGLEIGAGSGKRPKLIAVTQLTSTSEAAMQTEQIVKASLLESVLHYSDLTKQAGLDGVVCSALEAEEIRLQNGEDFLRVTPGIRLLSDAANDQIRVVTPEKARVIGSTNIVVGRSITRANDPVKAYNQVLKEWNV.

Residues aspartate 9, lysine 31, 58-67 (DLKLHDIPNT), threonine 120, arginine 182, glutamine 191, glycine 211, and arginine 212 contribute to the substrate site. The Proton donor role is filled by lysine 60.

Belongs to the OMP decarboxylase family. Type 1 subfamily. In terms of assembly, homodimer.

It carries out the reaction orotidine 5'-phosphate + H(+) = UMP + CO2. It participates in pyrimidine metabolism; UMP biosynthesis via de novo pathway; UMP from orotate: step 2/2. Functionally, catalyzes the decarboxylation of orotidine 5'-monophosphate (OMP) to uridine 5'-monophosphate (UMP). This Listeria welshimeri serovar 6b (strain ATCC 35897 / DSM 20650 / CCUG 15529 / CIP 8149 / NCTC 11857 / SLCC 5334 / V8) protein is Orotidine 5'-phosphate decarboxylase.